Reading from the N-terminus, the 153-residue chain is 6,7-dimethyl-8-ribityllumazine synthase (153 aa).

Residues F22, 56–58 (AFE), and 80–82 (AVI) contribute to the 5-amino-6-(D-ribitylamino)uracil site. 85–86 (GT) provides a ligand contact to (2S)-2-hydroxy-3-oxobutyl phosphate. The Proton donor role is filled by H88. F113 serves as a coordination point for 5-amino-6-(D-ribitylamino)uracil. R127 provides a ligand contact to (2S)-2-hydroxy-3-oxobutyl phosphate.

Belongs to the DMRL synthase family. Forms an icosahedral capsid composed of 60 subunits, arranged as a dodecamer of pentamers.

The catalysed reaction is (2S)-2-hydroxy-3-oxobutyl phosphate + 5-amino-6-(D-ribitylamino)uracil = 6,7-dimethyl-8-(1-D-ribityl)lumazine + phosphate + 2 H2O + H(+). Its pathway is cofactor biosynthesis; riboflavin biosynthesis; riboflavin from 2-hydroxy-3-oxobutyl phosphate and 5-amino-6-(D-ribitylamino)uracil: step 1/2. Functionally, catalyzes the formation of 6,7-dimethyl-8-ribityllumazine by condensation of 5-amino-6-(D-ribitylamino)uracil with 3,4-dihydroxy-2-butanone 4-phosphate. This is the penultimate step in the biosynthesis of riboflavin. This is 6,7-dimethyl-8-ribityllumazine synthase from Hydrogenovibrio crunogenus (strain DSM 25203 / XCL-2) (Thiomicrospira crunogena).